Here is a 585-residue protein sequence, read N- to C-terminus: Glutamine--tRNA ligase (585 aa).

The 'HIGH' region signature appears at 51 to 61 (PEPNGYLHIGH). Residues 52–54 (EPN) and 58–64 (HIGHAKS) each bind ATP. L-glutamine contacts are provided by D84 and Y238. Residues T257 and 292 to 293 (RL) contribute to the ATP site. A 'KMSKS' region motif is present at residues 299-303 (ITSKR).

The protein belongs to the class-I aminoacyl-tRNA synthetase family. As to quaternary structure, monomer.

The protein localises to the cytoplasm. It carries out the reaction tRNA(Gln) + L-glutamine + ATP = L-glutaminyl-tRNA(Gln) + AMP + diphosphate. This Cupriavidus taiwanensis (strain DSM 17343 / BCRC 17206 / CCUG 44338 / CIP 107171 / LMG 19424 / R1) (Ralstonia taiwanensis (strain LMG 19424)) protein is Glutamine--tRNA ligase.